Consider the following 246-residue polypeptide: Bis(5'-nucleosyl)-tetraphosphatase PrpE [asymmetrical] (246 aa).

It belongs to the PrpE family. Ni(2+) serves as cofactor.

It carries out the reaction P(1),P(4)-bis(5'-guanosyl) tetraphosphate + H2O = GMP + GTP + 2 H(+). Its function is as follows. Asymmetrically hydrolyzes Ap4p to yield AMP and ATP. In Bacillus thuringiensis (strain Al Hakam), this protein is Bis(5'-nucleosyl)-tetraphosphatase PrpE [asymmetrical].